We begin with the raw amino-acid sequence, 493 residues long: Glutamyl-tRNA(Gln) amidotransferase subunit A (493 aa).

Residues lysine 78 and serine 159 each act as charge relay system in the active site. The Acyl-ester intermediate role is filled by serine 183.

The protein belongs to the amidase family. GatA subfamily. In terms of assembly, heterotrimer of A, B and C subunits.

It catalyses the reaction L-glutamyl-tRNA(Gln) + L-glutamine + ATP + H2O = L-glutaminyl-tRNA(Gln) + L-glutamate + ADP + phosphate + H(+). Its function is as follows. Allows the formation of correctly charged Gln-tRNA(Gln) through the transamidation of misacylated Glu-tRNA(Gln) in organisms which lack glutaminyl-tRNA synthetase. The reaction takes place in the presence of glutamine and ATP through an activated gamma-phospho-Glu-tRNA(Gln). The sequence is that of Glutamyl-tRNA(Gln) amidotransferase subunit A from Sphingopyxis alaskensis (strain DSM 13593 / LMG 18877 / RB2256) (Sphingomonas alaskensis).